We begin with the raw amino-acid sequence, 403 residues long: Tryptophan 2,3-dioxygenase (403 aa).

A substrate-binding site is contributed by 69-73 (FIVIH). The PLD motif; required for enzymatic activity signature appears at 133–135 (PLD). R140 is a binding site for substrate. Residue H327 participates in heme binding. Residue T341 coordinates substrate.

This sequence belongs to the tryptophan 2,3-dioxygenase family. In terms of assembly, homotetramer. Dimer of dimers. The cofactor is heme. Expressed in body wall muscle cells, hypodermis, PLM neurons and touch-receptor neurons.

It catalyses the reaction L-tryptophan + O2 = N-formyl-L-kynurenine. It participates in amino-acid degradation; L-tryptophan degradation via kynurenine pathway; L-kynurenine from L-tryptophan: step 1/2. Its function is as follows. Heme-dependent dioxygenase that catalyzes the oxidative cleavage of the L-tryptophan (L-Trp) pyrrole ring and converts L-tryptophan to N-formyl-L-kynurenine. Catalyzes the oxidative cleavage of the indole moiety. Involved in regulation of protein homeostasis, longevity and reproducive life span. Specifically regulates proteotoxicity due to age-related aggregation of proteins like alpha-synuclein, via its effects on tryptophan metabolism. This is Tryptophan 2,3-dioxygenase from Caenorhabditis elegans.